We begin with the raw amino-acid sequence, 254 residues long: Nickel import ATP-binding protein NikD (254 aa).

In terms of domain architecture, ABC transporter spans 2–241 (PQQIELRNIA…PKHTVTRSLV (240 aa)). 36–43 (GGSGSGKS) is a binding site for ATP.

It belongs to the ABC transporter superfamily. Nickel importer (TC 3.A.1.5.3) family. As to quaternary structure, the complex is composed of two ATP-binding proteins (NikD and NikE), two transmembrane proteins (NikB and NikC) and a solute-binding protein (NikA).

Its subcellular location is the cell inner membrane. The enzyme catalyses Ni(2+)(out) + ATP + H2O = Ni(2+)(in) + ADP + phosphate + H(+). In terms of biological role, part of the ABC transporter complex NikABCDE involved in nickel import. Responsible for energy coupling to the transport system. This Shigella boydii serotype 4 (strain Sb227) protein is Nickel import ATP-binding protein NikD.